The chain runs to 411 residues: Tubulin beta-2 chain (411 aa).

GTP is bound by residues Glu37, Ser106, Gly110, Thr111, Gly112, Asn172, and Asn194. Residue Glu37 participates in Mg(2+) binding. Residues 392–411 (QYQDATAEPEGXYEEDYDEA) are disordered. Positions 402-411 (GXYEEDYDEA) are enriched in acidic residues.

Belongs to the tubulin family. As to quaternary structure, dimer of alpha and beta chains. A typical microtubule is a hollow water-filled tube with an outer diameter of 25 nm and an inner diameter of 15 nM. Alpha-beta heterodimers associate head-to-tail to form protofilaments running lengthwise along the microtubule wall with the beta-tubulin subunit facing the microtubule plus end conferring a structural polarity. Microtubules usually have 13 protofilaments but different protofilament numbers can be found in some organisms and specialized cells. Mg(2+) serves as cofactor.

It localises to the cytoplasm. The protein resides in the cytoskeleton. Tubulin is the major constituent of microtubules, a cylinder consisting of laterally associated linear protofilaments composed of alpha- and beta-tubulin heterodimers. Microtubules grow by the addition of GTP-tubulin dimers to the microtubule end, where a stabilizing cap forms. Below the cap, tubulin dimers are in GDP-bound state, owing to GTPase activity of alpha-tubulin. This chain is Tubulin beta-2 chain (TUBB2), found in Anemia phyllitidis (Fern).